We begin with the raw amino-acid sequence, 134 residues long: Small ribosomal subunit protein uS9 (134 aa).

The protein belongs to the universal ribosomal protein uS9 family.

In Pseudothermotoga lettingae (strain ATCC BAA-301 / DSM 14385 / NBRC 107922 / TMO) (Thermotoga lettingae), this protein is Small ribosomal subunit protein uS9.